The chain runs to 603 residues: Spastin (603 aa).

The segment at 1-34 is disordered; that stretch reads MNSPGGRNNKKKPVTPAAETGPGPPTPPPPPAET. At 1–54 the chain is on the cytoplasmic side; sequence MNSPGGRNNKKKPVTPAAETGPGPPTPPPPPAETQVLLAPPSLHKRNLYLFSYP. The segment covering 22–32 has biased composition (pro residues); the sequence is PGPPTPPPPPA. Residues 55 to 75 constitute an intramembrane region (helical); the sequence is LLAAFSLLRFLAFQLGLLFVW. Topologically, residues 76–603 are cytoplasmic; that stretch reads FCERLSRRVM…WNKEFGDTTV (528 aa). Residues 113-188 form the MIT domain; sequence YHQQAFQYIS…LMAKDRLQLL (76 aa). The disordered stretch occupies residues 216-294; it reads GLLKPEKGAV…RTNKPTTPTT (79 aa). Residues 219–231 show a composition bias toward basic and acidic residues; that stretch reads KPEKGAVPKKKDP. The segment covering 281–294 has biased composition (low complexity); that stretch reads KNNTRTNKPTTPTT. 369 to 376 is a binding site for ATP; that stretch reads GPPGNGKT.

Belongs to the AAA ATPase family. Spastin subfamily. As to quaternary structure, homohexamer. The homohexamer is stabilized by ATP-binding. The homohexamer may adopt a ring conformation through which microtubules pass prior to being severed. Interacts with microtubules.

It localises to the membrane. The protein localises to the cytoplasm. Its subcellular location is the cytoskeleton. The protein resides in the microtubule organizing center. It is found in the centrosome. It localises to the perinuclear region. The protein localises to the nucleus. It catalyses the reaction n ATP + n H2O + a microtubule = n ADP + n phosphate + (n+1) alpha/beta tubulin heterodimers.. Functionally, ATP-dependent microtubule severing protein that specifically recognizes and cuts microtubules that are polyglutamylated. Preferentially recognizes and acts on microtubules decorated with short polyglutamate tails: severing activity increases as the number of glutamates per tubulin rises from one to eight, but decreases beyond this glutamylation threshold. Microtubule severing promotes reorganization of cellular microtubule arrays and the release of microtubules from the centrosome following nucleation. Required for membrane traffic from the endoplasmic reticulum (ER) to the Golgi and for completion of the abscission stage of cytokinesis. Also plays a role in axon growth and the formation of axonal branches. The sequence is that of Spastin from Xenopus tropicalis (Western clawed frog).